We begin with the raw amino-acid sequence, 456 residues long: MSVLLFGVSHRSAPVSVLEQLSVDDSDQAKLIDQVLQSSLVTEAMVLSTCNRVEIYAVVEAFHGGLSVIGQVLSEHSGMSLQDLTKHAYVRYAEAAVEHLFSVAGGLDSAVIGEQQVLGQVRRAYASAEANHTVGRTLHELSQRALAVGKRVHSETGIDAAGASVVSVALDTAEKKVGSLAGRSAVLVGAGSMGALAAKQLMRAGVERIHVVNRTLPRAAKLAENVRSYGITAEAFPFDHLPPLLTDADIVVTCTGAVRPVVSLADVHRGLAHVREPKELVICDLGMPRDVDPAVAGLPGVFVVDMERILREPTARAAATDADAARTIVAAEVAKYLAGQRMAEVTPTVTALRQRAADVVEAELLRLDNRLPGLDAAHRDEVANTVRRVVDKLLHAPTVRVKQLAGAPGGDSYAEALRELFELDQHAVDAVAGTELGPLAGGDELGSLAIDLDMTE.

Residues 49–52, Ser-109, 114–116, and Gln-120 each bind substrate; these read TCNR and EQQ. The active-site Nucleophile is Cys-50. Residue 189–194 coordinates NADP(+); that stretch reads GAGSMG.

Belongs to the glutamyl-tRNA reductase family. As to quaternary structure, homodimer.

It carries out the reaction (S)-4-amino-5-oxopentanoate + tRNA(Glu) + NADP(+) = L-glutamyl-tRNA(Glu) + NADPH + H(+). Its pathway is porphyrin-containing compound metabolism; protoporphyrin-IX biosynthesis; 5-aminolevulinate from L-glutamyl-tRNA(Glu): step 1/2. In terms of biological role, catalyzes the NADPH-dependent reduction of glutamyl-tRNA(Glu) to glutamate 1-semialdehyde (GSA). The sequence is that of Glutamyl-tRNA reductase from Mycolicibacterium vanbaalenii (strain DSM 7251 / JCM 13017 / BCRC 16820 / KCTC 9966 / NRRL B-24157 / PYR-1) (Mycobacterium vanbaalenii).